The sequence spans 149 residues: 2S seed storage albumin protein (149 aa).

The N-terminal stretch at 1 to 22 (MKLFIILATATLLIAATQATYP) is a signal peptide. 4 disulfides stabilise this stretch: C38–C98, C52–C87, C88–C133, and C100–C140. Residues 121-128 (EGVRDLKE) form an igE-binding region.

Belongs to the 2S seed storage albumins family. As to expression, expressed in seeds (at protein level).

Its function is as follows. Seed storage protein. In Fagopyrum esculentum (Common buckwheat), this protein is 2S seed storage albumin protein.